The chain runs to 157 residues: Protein Smg homolog (157 aa).

It belongs to the Smg family.

In Shewanella sediminis (strain HAW-EB3), this protein is Protein Smg homolog.